A 197-amino-acid polypeptide reads, in one-letter code: FMN-dependent NADH:quinone oxidoreductase (197 aa).

FMN contacts are provided by residues S10, 16–18, 93–96, and 137–140; these read SQS, MYNF, and TRGG.

This sequence belongs to the azoreductase type 1 family. In terms of assembly, homodimer. It depends on FMN as a cofactor.

The catalysed reaction is 2 a quinone + NADH + H(+) = 2 a 1,4-benzosemiquinone + NAD(+). It carries out the reaction N,N-dimethyl-1,4-phenylenediamine + anthranilate + 2 NAD(+) = 2-(4-dimethylaminophenyl)diazenylbenzoate + 2 NADH + 2 H(+). Its function is as follows. Quinone reductase that provides resistance to thiol-specific stress caused by electrophilic quinones. Functionally, also exhibits azoreductase activity. Catalyzes the reductive cleavage of the azo bond in aromatic azo compounds to the corresponding amines. This chain is FMN-dependent NADH:quinone oxidoreductase, found in Shewanella frigidimarina (strain NCIMB 400).